The following is a 229-amino-acid chain: UPF0128 protein aq_756 (229 aa).

It belongs to the UPF0128 family.

The sequence is that of UPF0128 protein aq_756 from Aquifex aeolicus (strain VF5).